The primary structure comprises 146 residues: MAMSLCPLLLVFVLGLGLTPPSLAQDDSRYRQFLTKHYDANPRGRNDRYCESMMVRRHLTTPCKDTNTFIHGSKSSIKAICGNKNGNPYGETLRISKTRFQVTTCKHAGGSPRPPCRYRATPGFRSIVIACENGLPVHFDESFFRP.

The first 24 residues, 1-24 (MAMSLCPLLLVFVLGLGLTPPSLA), serve as a signal peptide directing secretion. The residue at position 25 (Gln-25) is a Pyrrolidone carboxylic acid. His-37 serves as the catalytic Proton acceptor. Arg-45 serves as a coordination point for tRNA. Intrachain disulfides connect Cys-50/Cys-105, Cys-63/Cys-116, and Cys-81/Cys-131. Positions 55–59 (VRRHL) match the Nucleolar localization signal motif. Residues Cys-105 and Ile-127 each coordinate tRNA. The active-site Proton donor is the His-138.

It belongs to the pancreatic ribonuclease family. In terms of assembly, homodimer. Interacts with RNH1; inhibiting ANG ribonuclease activity. Interacts with PCNA.

The protein localises to the secreted. Its subcellular location is the nucleus. The protein resides in the nucleolus. It is found in the cytoplasm. It localises to the stress granule. Has weak tRNA ribonuclease activity by itself due to partial autoinhibition by its C-terminus, which folds into a short alpha-helix that partially occludes the substrate-binding site. In absence of stress, the ribonuclease activity is inhibited by RNH1 in the cytoplasm. In response to stress, dissociates from RNH1 in the cytoplasm and associates with cytoplasmic ribosomes with vacant A-sites: ribosomes directly activate the tRNA ribonuclease activity of ANG by refolding the C-terminal alpha-helix. In response to stress, the angiogenic activity of ANG is inhibited by RNH1 in the nucleus. Its function is as follows. Secreted ribonuclease that can either promote or restrict cell proliferation of target cells, depending on the context. Endocytosed in target cells via its receptor PLXNB2 and translocates to the cytoplasm or nucleus. Under stress conditions, localizes to the cytoplasm and promotes the assembly of stress granules (SGs): specifically cleaves a subset of tRNAs within anticodon loops to produce tRNA-derived stress-induced fragments (tiRNAs), resulting in translation repression and inhibition of cell proliferation. tiRNas also prevent formation of apoptosome, thereby promoting cell survival. Preferentially cleaves RNAs between a pyrimidine and an adenosine residue, suggesting that it cleaves the anticodon loop of tRNA(Ala) (32-UUAGCAU-38) after positions 33 and 36. Cleaves a subset of tRNAs, including tRNA(Ala), tRNA(Glu), tRNA(Gly), tRNA(Lys), tRNA(Val), tRNA(His), tRNA(Asp) and tRNA(Sec). Under growth conditions and in differentiated cells, translocates to the nucleus and stimulates ribosomal RNA (rRNA) transcription, including that containing the initiation site sequences of 45S rRNA, thereby promoting cell growth and proliferation. Angiogenin induces vascularization of normal and malignant tissues via its ability to promote rRNA transcription. Involved in hematopoietic stem and progenitor cell (HSPC) growth and survival by promoting rRNA transcription in growth conditions and inhibiting translation in response to stress, respectively. Mediates the crosstalk between myeloid and intestinal epithelial cells to protect the intestinal epithelial barrier integrity: secreted by myeloid cells and promotes intestinal epithelial cells proliferation and survival. Also mediates osteoclast-endothelial cell crosstalk in growing bone: produced by osteoclasts and protects the neighboring vascular cells against senescence by promoting rRNA transcription. This Equus caballus (Horse) protein is Angiogenin (ANG).